We begin with the raw amino-acid sequence, 418 residues long: Queuine tRNA-ribosyltransferase accessory subunit 2 (418 aa).

Zn(2+) is bound by residues Cys325, Cys327, Cys330, and His356.

Belongs to the queuine tRNA-ribosyltransferase family. QTRT2 subfamily. Heterodimer of a catalytic subunit and an accessory subunit. It depends on Zn(2+) as a cofactor.

Its subcellular location is the cytoplasm. In terms of biological role, non-catalytic subunit of the queuine tRNA-ribosyltransferase (TGT) that catalyzes the base-exchange of a guanine (G) residue with queuine (Q) at position 34 (anticodon wobble position) in tRNAs with GU(N) anticodons (tRNA-Asp, -Asn, -His and -Tyr), resulting in the hypermodified nucleoside queuosine (7-(((4,5-cis-dihydroxy-2-cyclopenten-1-yl)amino)methyl)-7-deazaguanosine). The polypeptide is Queuine tRNA-ribosyltransferase accessory subunit 2 (Drosophila erecta (Fruit fly)).